We begin with the raw amino-acid sequence, 390 residues long: Succinyl-diaminopimelate desuccinylase (390 aa).

His75 is a binding site for Zn(2+). Asp77 is an active-site residue. Position 108 (Asp108) interacts with Zn(2+). The active-site Proton acceptor is Glu141. 3 residues coordinate Zn(2+): Glu142, Glu170, and His359.

The protein belongs to the peptidase M20A family. DapE subfamily. As to quaternary structure, homodimer. The cofactor is Zn(2+). Requires Co(2+) as cofactor.

The enzyme catalyses N-succinyl-(2S,6S)-2,6-diaminopimelate + H2O = (2S,6S)-2,6-diaminopimelate + succinate. It functions in the pathway amino-acid biosynthesis; L-lysine biosynthesis via DAP pathway; LL-2,6-diaminopimelate from (S)-tetrahydrodipicolinate (succinylase route): step 3/3. Functionally, catalyzes the hydrolysis of N-succinyl-L,L-diaminopimelic acid (SDAP), forming succinate and LL-2,6-diaminopimelate (DAP), an intermediate involved in the bacterial biosynthesis of lysine and meso-diaminopimelic acid, an essential component of bacterial cell walls. This chain is Succinyl-diaminopimelate desuccinylase, found in Maricaulis maris (strain MCS10) (Caulobacter maris).